Here is a 37-residue protein sequence, read N- to C-terminus: ATP synthase subunit O, mitochondrial (37 aa).

Belongs to the ATPase delta chain family. F-type ATPases have 2 components, CF(1) - the catalytic core - and CF(0) - the membrane proton channel. CF(1) has five subunits: alpha(3), beta(3), gamma(1), delta(1), epsilon(1). CF(0) has three main subunits: a, b and c.

Its subcellular location is the mitochondrion. The protein resides in the mitochondrion inner membrane. Functionally, mitochondrial membrane ATP synthase (F(1)F(0) ATP synthase or Complex V) produces ATP from ADP in the presence of a proton gradient across the membrane which is generated by electron transport complexes of the respiratory chain. F-type ATPases consist of two structural domains, F(1) - containing the extramembraneous catalytic core and F(0) - containing the membrane proton channel, linked together by a central stalk and a peripheral stalk. During catalysis, ATP synthesis in the catalytic domain of F(1) is coupled via a rotary mechanism of the central stalk subunits to proton translocation. Part of the complex F(0) domain and the peripheric stalk, which acts as a stator to hold the catalytic alpha(3)beta(3) subcomplex and subunit a/ATP6 static relative to the rotary elements. This is ATP synthase subunit O, mitochondrial from Solanum tuberosum (Potato).